Consider the following 537-residue polypeptide: Leucine-rich repeat LGI family member 4 (537 aa).

The first 19 residues, 1-19 (MGGAGILLFLLAWAGAGVA), serve as a signal peptide directing secretion. LRR repeat units lie at residues 53–74 (TLLS…SFLK), 77–98 (SLHL…AFIG), 101–122 (YLQY…ALRG), and 125–146 (SLTH…LFRG). The 51-residue stretch at 158 to 208 (NPFQCDCRVLWLLQWMPTVNASVGTGACAGPPAVAQIQLNHLDPKKFKCRA) folds into the LRRCT domain. N177 is a glycosylation site (N-linked (GlcNAc...) asparagine). EAR repeat units follow at residues 210-252 (ELSW…VWDY), 256-298 (RFRP…SRSS), 302-349 (RLTP…CRDG), 351-394 (GFYP…HWVG), 396-439 (RFER…RWDG), 441-483 (MFRL…RFES), and 487-532 (ILEP…QHHE).

Can bind to ADAM11, ADAM22 and ADAM23. As to expression, brain. Expressed in the entire developing peripheral nerves. Strongly expressed in the trigeminal nerve and ganglion and particularly abundant in the boundary cap cells - a transient population of cells that contributes to the Schwann cell population of the dorsal root nerve.

Its subcellular location is the secreted. Its function is as follows. Component of Schwann cell signaling pathway(s) that controls axon segregation and myelin formation. The protein is Leucine-rich repeat LGI family member 4 (Lgi4) of Mus musculus (Mouse).